Consider the following 143-residue polypeptide: Ribonuclease H (143 aa).

One can recognise an RNase H type-1 domain in the interval M1 to L141. Mg(2+) is bound by residues D9, E47, D69, and D133.

The protein belongs to the RNase H family. In terms of assembly, monomer. Mg(2+) serves as cofactor.

It is found in the cytoplasm. It catalyses the reaction Endonucleolytic cleavage to 5'-phosphomonoester.. Functionally, endonuclease that specifically degrades the RNA of RNA-DNA hybrids. The chain is Ribonuclease H from Novosphingobium aromaticivorans (strain ATCC 700278 / DSM 12444 / CCUG 56034 / CIP 105152 / NBRC 16084 / F199).